The primary structure comprises 237 residues: MNVFDRNINFDSLFKFSQISHSTQVHLKNVYSSLAVCMFVAAAGSYVHVVTRLFQGGMLSVLGSLGMMFWLAMTPHNSETEKKRLAILAGFAFLTGVGLCPTLDFVIAINPSIIVTAFLGTSVIFVCFTLSALYAKRRSYLFLGGTLMSGLSILFLMSMMNMFFGSVMLFKAHMYLGLLIMCGFVLXDTQLIIEKAENGDKDYVWHSVDLFLDFITIFRKLMVILALNDKDKKKEKK.

At 1-29 (MNVFDRNINFDSLFKFSQISHSTQVHLKN) the chain is on the cytoplasmic side. The chain crosses the membrane as a helical span at residues 30-50 (VYSSLAVCMFVAAAGSYVHVV). The Lumenal segment spans residues 51–52 (TR). A helical membrane pass occupies residues 53-73 (LFQGGMLSVLGSLGMMFWLAM). Topologically, residues 74-86 (TPHNSETEKKRLA) are cytoplasmic. The helical transmembrane segment at 87–107 (ILAGFAFLTGVGLCPTLDFVI) threads the bilayer. At 108 to 112 (AINPS) the chain is on the lumenal side. Residues 113–133 (IIVTAFLGTSVIFVCFTLSAL) form a helical membrane-spanning segment. Over 134–139 (YAKRRS) the chain is Cytoplasmic. The chain crosses the membrane as a helical span at residues 140 to 160 (YLFLGGTLMSGLSILFLMSMM). The Lumenal segment spans residues 161–166 (NMFFGS). The helical transmembrane segment at 167-187 (VMLFKAHMYLGLLIMCGFVLX) threads the bilayer. The Cytoplasmic portion of the chain corresponds to 188-206 (DTQLIIEKAENGDKDYVWH). Positions 207-227 (SVDLFLDFITIFRKLMVILAL) form an intramembrane region, helical. Residues 228–237 (NDKDKKKEKK) are Cytoplasmic-facing.

The protein belongs to the BI1 family. As to expression, highly abundant in testis.

Its subcellular location is the endoplasmic reticulum membrane. Functionally, suppressor of apoptosis. Modulates unfolded protein response signaling. Modulate ER calcium homeostasis by acting as a calcium-leak channel. The protein is Probable Bax inhibitor 1 (tmbim6) of Paralichthys olivaceus (Bastard halibut).